The sequence spans 241 residues: Small ribosomal subunit protein uS2 (241 aa).

The protein belongs to the universal ribosomal protein uS2 family.

The protein is Small ribosomal subunit protein uS2 of Escherichia coli (strain 55989 / EAEC).